The primary structure comprises 65 residues: Large ribosomal subunit protein bL28 (65 aa).

Positions 1–21 (MAKKDQLTLRGPLYGNNRSHS) are disordered.

The protein belongs to the bacterial ribosomal protein bL28 family.

The polypeptide is Large ribosomal subunit protein bL28 (Mycoplasma pneumoniae (strain ATCC 29342 / M129 / Subtype 1) (Mycoplasmoides pneumoniae)).